We begin with the raw amino-acid sequence, 421 residues long: Adenylosuccinate synthetase (421 aa).

GTP-binding positions include glycine 11–lysine 17 and glycine 39–threonine 41. The Proton acceptor role is filled by aspartate 12. Residues aspartate 12 and glycine 39 each coordinate Mg(2+). IMP-binding positions include aspartate 12 to lysine 15, asparagine 37 to histidine 40, threonine 124, arginine 138, glutamine 220, threonine 235, and arginine 299. Histidine 40 (proton donor) is an active-site residue. Threonine 295–arginine 301 contributes to the substrate binding site. Residues arginine 301, lysine 327–aspartate 329, and serine 409–glycine 411 contribute to the GTP site.

Belongs to the adenylosuccinate synthetase family. Homodimer. The cofactor is Mg(2+).

Its subcellular location is the cytoplasm. The catalysed reaction is IMP + L-aspartate + GTP = N(6)-(1,2-dicarboxyethyl)-AMP + GDP + phosphate + 2 H(+). The protein operates within purine metabolism; AMP biosynthesis via de novo pathway; AMP from IMP: step 1/2. Its function is as follows. Plays an important role in the de novo pathway of purine nucleotide biosynthesis. Catalyzes the first committed step in the biosynthesis of AMP from IMP. In Methanothrix thermoacetophila (strain DSM 6194 / JCM 14653 / NBRC 101360 / PT) (Methanosaeta thermophila), this protein is Adenylosuccinate synthetase.